A 384-amino-acid chain; its full sequence is Probable splicing factor YJU2B (384 aa).

The disordered stretch occupies residues 1–28; sequence MGERKGTNKYYPPDFDPAKHGSLNGYRN. A coiled-coil region spans residues 183 to 212; the sequence is NSLLRSKFREEKKQIKEEEERDQALLTKAS. The interval 275 to 331 is disordered; that stretch reads GIRTKTPSVPGISPVSLGVVRRTSKEENKAEDKSVESPDGSRSRKAEGMCRKEETGC. Positions 297–331 are enriched in basic and acidic residues; the sequence is TSKEENKAEDKSVESPDGSRSRKAEGMCRKEETGC.

The protein belongs to the CWC16 family.

It localises to the nucleus. May be involved in mRNA splicing. This Xenopus laevis (African clawed frog) protein is Probable splicing factor YJU2B (yju2b).